Consider the following 328-residue polypeptide: Malate dehydrogenase (328 aa).

NAD(+) is bound at residue 11–17 (GAAGQIG). Residues Arg-94 and Arg-100 each coordinate substrate. Residues Asn-107, Gln-114, and 131–133 (VGN) each bind NAD(+). Asn-133 and Arg-164 together coordinate substrate. The Proton acceptor role is filled by His-189.

The protein belongs to the LDH/MDH superfamily. MDH type 2 family.

It carries out the reaction (S)-malate + NAD(+) = oxaloacetate + NADH + H(+). Functionally, catalyzes the reversible oxidation of malate to oxaloacetate. The polypeptide is Malate dehydrogenase (Xanthomonas euvesicatoria pv. vesicatoria (strain 85-10) (Xanthomonas campestris pv. vesicatoria)).